A 78-amino-acid chain; its full sequence is D-alanyl carrier protein (78 aa).

One can recognise a Carrier domain in the interval 1 to 78 (MEFRDQVLDL…KIVAVLEELR (78 aa)). Ser36 is modified (O-(pantetheine 4'-phosphoryl)serine).

The protein belongs to the DltC family. In terms of processing, 4'-phosphopantetheine is transferred from CoA to a specific serine of apo-DCP.

It is found in the cytoplasm. Its pathway is cell wall biogenesis; lipoteichoic acid biosynthesis. Its function is as follows. Carrier protein involved in the D-alanylation of lipoteichoic acid (LTA). The loading of thioester-linked D-alanine onto DltC is catalyzed by D-alanine--D-alanyl carrier protein ligase DltA. The DltC-carried D-alanyl group is further transferred to cell membrane phosphatidylglycerol (PG) by forming an ester bond, probably catalyzed by DltD. D-alanylation of LTA plays an important role in modulating the properties of the cell wall in Gram-positive bacteria, influencing the net charge of the cell wall. The sequence is that of D-alanyl carrier protein from Staphylococcus saprophyticus subsp. saprophyticus (strain ATCC 15305 / DSM 20229 / NCIMB 8711 / NCTC 7292 / S-41).